Reading from the N-terminus, the 493-residue chain is MGNYFNTLNLRQQLDQLGRCRFMDREEFADEVNFLKGKKIVIIGCGAQGLNQGLNMRDSGLDIAYALRPEAIEEKRASFQRASENGFVVGTYQQLIPTADLVINLTPDKQHSKVVADVMPLIKQGAALGYSHGLNIVELGEKIRQDITVVMVAPKCPGTEVREEFKRGFGVPTLIAVHPENDPKGEGLAIAKAWAAATGGHRAGVLESSFVAEVKSDLMGEQTILCGMLQAGSLVCYDKLIADGKDPAYAGKLIQYGWETITEALKQGGITLMMDRLSNSAKLRAFSLSEQIKEKLDFLFKKHMDDIISGEFSRVMMEDWANGDANLLEWREQTGKTAFENAPKGENIKISEQEYFDHGVLMVAMVKAGVELAFDTMVETGIYEESAYYESLHELPLIANTIARKRLYEMNVVISDTAEYGNYLFANVAAPILAKEIIPTLKRGDLGESTPATEIDNILLRDVNDAIRQHPIELIGQELRGYMTDMKRISSQE.

A KARI N-terminal Rossmann domain is found at 14-208 (LDQLGRCRFM…GGHRAGVLES (195 aa)). Residues 45-48 (CGAQ), Arg68, Arg76, Ser78, and 108-110 (DKQ) each bind NADP(+). His132 is a catalytic residue. Gly158 is an NADP(+) binding site. KARI C-terminal knotted domains lie at 209 to 345 (SFVA…APKG) and 346 to 486 (ENIK…MTDM). Residues Asp217, Glu221, Glu390, and Glu394 each coordinate Mg(2+). Residue Ser415 participates in substrate binding.

This sequence belongs to the ketol-acid reductoisomerase family. Requires Mg(2+) as cofactor.

It catalyses the reaction (2R)-2,3-dihydroxy-3-methylbutanoate + NADP(+) = (2S)-2-acetolactate + NADPH + H(+). The catalysed reaction is (2R,3R)-2,3-dihydroxy-3-methylpentanoate + NADP(+) = (S)-2-ethyl-2-hydroxy-3-oxobutanoate + NADPH + H(+). It participates in amino-acid biosynthesis; L-isoleucine biosynthesis; L-isoleucine from 2-oxobutanoate: step 2/4. It functions in the pathway amino-acid biosynthesis; L-valine biosynthesis; L-valine from pyruvate: step 2/4. Functionally, involved in the biosynthesis of branched-chain amino acids (BCAA). Catalyzes an alkyl-migration followed by a ketol-acid reduction of (S)-2-acetolactate (S2AL) to yield (R)-2,3-dihydroxy-isovalerate. In the isomerase reaction, S2AL is rearranged via a Mg-dependent methyl migration to produce 3-hydroxy-3-methyl-2-ketobutyrate (HMKB). In the reductase reaction, this 2-ketoacid undergoes a metal-dependent reduction by NADPH to yield (R)-2,3-dihydroxy-isovalerate. The chain is Ketol-acid reductoisomerase (NADP(+)) from Histophilus somni (strain 2336) (Haemophilus somnus).